The primary structure comprises 412 residues: Multifunctional CCA protein (412 aa).

ATP contacts are provided by Gly8 and Arg11. CTP-binding residues include Gly8 and Arg11. Positions 21 and 23 each coordinate Mg(2+). 3 residues coordinate ATP: Arg91, Arg137, and Arg140. CTP-binding residues include Arg91, Arg137, and Arg140. Residues 228–329 enclose the HD domain; that stretch reads TGIHTLMTLS…VKLFDSIDAW (102 aa).

Belongs to the tRNA nucleotidyltransferase/poly(A) polymerase family. Bacterial CCA-adding enzyme type 1 subfamily. In terms of assembly, monomer. Can also form homodimers and oligomers. Mg(2+) serves as cofactor. The cofactor is Ni(2+).

The catalysed reaction is a tRNA precursor + 2 CTP + ATP = a tRNA with a 3' CCA end + 3 diphosphate. It catalyses the reaction a tRNA with a 3' CCA end + 2 CTP + ATP = a tRNA with a 3' CCACCA end + 3 diphosphate. Catalyzes the addition and repair of the essential 3'-terminal CCA sequence in tRNAs without using a nucleic acid template. Adds these three nucleotides in the order of C, C, and A to the tRNA nucleotide-73, using CTP and ATP as substrates and producing inorganic pyrophosphate. tRNA 3'-terminal CCA addition is required both for tRNA processing and repair. Also involved in tRNA surveillance by mediating tandem CCA addition to generate a CCACCA at the 3' terminus of unstable tRNAs. While stable tRNAs receive only 3'-terminal CCA, unstable tRNAs are marked with CCACCA and rapidly degraded. This is Multifunctional CCA protein from Escherichia coli O6:K15:H31 (strain 536 / UPEC).